Consider the following 169-residue polypeptide: Crossover junction endodeoxyribonuclease RuvC (169 aa).

Catalysis depends on residues aspartate 15, glutamate 75, and aspartate 147. Residues aspartate 15, glutamate 75, and aspartate 147 each coordinate Mg(2+).

This sequence belongs to the RuvC family. As to quaternary structure, homodimer which binds Holliday junction (HJ) DNA. The HJ becomes 2-fold symmetrical on binding to RuvC with unstacked arms; it has a different conformation from HJ DNA in complex with RuvA. In the full resolvosome a probable DNA-RuvA(4)-RuvB(12)-RuvC(2) complex forms which resolves the HJ. Mg(2+) is required as a cofactor.

It is found in the cytoplasm. The catalysed reaction is Endonucleolytic cleavage at a junction such as a reciprocal single-stranded crossover between two homologous DNA duplexes (Holliday junction).. In terms of biological role, the RuvA-RuvB-RuvC complex processes Holliday junction (HJ) DNA during genetic recombination and DNA repair. Endonuclease that resolves HJ intermediates. Cleaves cruciform DNA by making single-stranded nicks across the HJ at symmetrical positions within the homologous arms, yielding a 5'-phosphate and a 3'-hydroxyl group; requires a central core of homology in the junction. The consensus cleavage sequence is 5'-(A/T)TT(C/G)-3'. Cleavage occurs on the 3'-side of the TT dinucleotide at the point of strand exchange. HJ branch migration catalyzed by RuvA-RuvB allows RuvC to scan DNA until it finds its consensus sequence, where it cleaves and resolves the cruciform DNA. This Caulobacter sp. (strain K31) protein is Crossover junction endodeoxyribonuclease RuvC.